A 246-amino-acid polypeptide reads, in one-letter code: Carboxy-S-adenosyl-L-methionine synthase (246 aa).

Residues tyrosine 43, 68 to 70, 93 to 94, 121 to 122, asparagine 136, and arginine 203 each bind S-adenosyl-L-methionine; these read GCS, DN, and DI.

It belongs to the class I-like SAM-binding methyltransferase superfamily. Cx-SAM synthase family. In terms of assembly, homodimer.

The catalysed reaction is prephenate + S-adenosyl-L-methionine = carboxy-S-adenosyl-L-methionine + 3-phenylpyruvate + H2O. Catalyzes the conversion of S-adenosyl-L-methionine (SAM) to carboxy-S-adenosyl-L-methionine (Cx-SAM). The sequence is that of Carboxy-S-adenosyl-L-methionine synthase from Vibrio cholerae serotype O1 (strain ATCC 39541 / Classical Ogawa 395 / O395).